The primary structure comprises 449 residues: Phosphomannomutase (449 aa).

Catalysis depends on S97, which acts as the Phosphoserine intermediate. Mg(2+) contacts are provided by S97, D237, D239, and D241.

It belongs to the phosphohexose mutase family. The cofactor is Mg(2+).

It catalyses the reaction alpha-D-mannose 1-phosphate = D-mannose 6-phosphate. The protein operates within amino-acid biosynthesis. Its function is as follows. Catalyzes the formation of mannose-1-P from mannose-6-P. Can also use glucose-6-P. This is Phosphomannomutase (manB) from Methanocaldococcus jannaschii (strain ATCC 43067 / DSM 2661 / JAL-1 / JCM 10045 / NBRC 100440) (Methanococcus jannaschii).